The following is a 307-amino-acid chain: Homoserine O-acetyltransferase (307 aa).

Residue Cys142 is the Acyl-thioester intermediate of the active site. Substrate contacts are provided by Lys163 and Ser192. Catalysis depends on His235, which acts as the Proton acceptor. Residue Glu237 is part of the active site. Residue Arg249 participates in substrate binding.

Belongs to the MetA family.

Its subcellular location is the cytoplasm. The catalysed reaction is L-homoserine + acetyl-CoA = O-acetyl-L-homoserine + CoA. Its pathway is amino-acid biosynthesis; L-methionine biosynthesis via de novo pathway; O-acetyl-L-homoserine from L-homoserine: step 1/1. In terms of biological role, transfers an acetyl group from acetyl-CoA to L-homoserine, forming acetyl-L-homoserine. This is Homoserine O-acetyltransferase from Desulfitobacterium hafniense (strain DSM 10664 / DCB-2).